A 1135-amino-acid polypeptide reads, in one-letter code: Phytochrome C (1135 aa).

Polar residues predominate over residues Met-1–Cys-11. Residues Met-1 to Val-26 are disordered. Residues Asn-216 to Val-399 enclose the GAF domain. Cys-321 contributes to the phytochromobilin binding site. PAS domains lie at Val-618–Ile-688 and Ile-748–Ser-822. In terms of domain architecture, Histidine kinase spans Tyr-902 to Gln-1122.

Belongs to the phytochrome family. As to quaternary structure, homodimer. Contains one covalently linked phytochromobilin chromophore.

Functionally, regulatory photoreceptor which exists in two forms that are reversibly interconvertible by light: the Pr form that absorbs maximally in the red region of the spectrum and the Pfr form that absorbs maximally in the far-red region. Photoconversion of Pr to Pfr induces an array of morphogenic responses, whereas reconversion of Pfr to Pr cancels the induction of those responses. Pfr controls the expression of a number of nuclear genes including those encoding the small subunit of ribulose-bisphosphate carboxylase, chlorophyll A/B binding protein, protochlorophyllide reductase, rRNA, etc. It also controls the expression of its own gene(s) in a negative feedback fashion. The sequence is that of Phytochrome C (PHYC) from Sorghum bicolor (Sorghum).